The following is a 316-amino-acid chain: Protein C4 (316 aa).

The protein belongs to the poxviridae OPG031 protein family.

It localises to the host cytoplasm. It is found in the host nucleus. Its function is as follows. Plays a role in the inhibition of host NF-kappa-B activation. Mechanistically, blocks the subunit p65/RELA translocation into the host nucleus. This chain is Protein C4 (OPG031), found in Homo sapiens (Human).